The sequence spans 385 residues: Pepsin A (385 aa).

Positions 1 to 15 (MKWLLLLSLVVLSEC) are cleaved as a signal peptide. Positions 16–59 (LVKVPLVRKKSLRQNLIKNGKLKDFLKTHKHNPASKYFPEAAAL) are cleaved as a propeptide — activation peptide. The region spanning 73–382 (YFGTIGIGTP…DRANNKVGLA (310 aa)) is the Peptidase A1 domain. D91 is a catalytic residue. C104 and C109 are disulfide-bonded. S127 carries the post-translational modification Phosphoserine. Residues C265 and C269 are joined by a disulfide bond. The active site involves D274. Residues C308 and C341 are joined by a disulfide bond.

It belongs to the peptidase A1 family. Post-translationally, minor amounts of the active enzyme occur with 'Ala-58' at the amino end.

It localises to the secreted. It catalyses the reaction Preferential cleavage: hydrophobic, preferably aromatic, residues in P1 and P1' positions. Cleaves 1-Phe-|-Val-2, 4-Gln-|-His-5, 13-Glu-|-Ala-14, 14-Ala-|-Leu-15, 15-Leu-|-Tyr-16, 16-Tyr-|-Leu-17, 23-Gly-|-Phe-24, 24-Phe-|-Phe-25 and 25-Phe-|-Tyr-26 bonds in the B chain of insulin.. Functionally, shows particularly broad specificity; although bonds involving phenylalanine and leucine are preferred, many others are also cleaved to some extent. The polypeptide is Pepsin A (PGA) (Sus scrofa (Pig)).